Reading from the N-terminus, the 430-residue chain is Aspartate aminotransferase, mitochondrial (430 aa).

The transit peptide at 1–29 (MALLHSGRALPGIAAAFHPGLAAAASARA) directs the protein to the mitochondrion. Threonine 48 carries the phosphothreonine modification. An N6-acetyllysine modification is found at lysine 59. Glycine 65 lines the substrate pocket. Position 73 is an N6-acetyllysine; alternate (lysine 73). At lysine 73 the chain carries N6-succinyllysine; alternate. Lysine 82 carries the post-translational modification N6-acetyllysine. Lysine 90 bears the N6-acetyllysine; alternate mark. Lysine 90 is modified (N6-succinyllysine; alternate). A 3'-nitrotyrosine; alternate modification is found at tyrosine 96. The residue at position 96 (tyrosine 96) is a Phosphotyrosine; alternate. Residues lysine 107 and lysine 122 each carry the N6-acetyllysine; alternate modification. An N6-succinyllysine; alternate mark is found at lysine 107 and lysine 122. At serine 143 the chain carries Phosphoserine. At lysine 159 the chain carries N6-acetyllysine; alternate. Residue lysine 159 is modified to N6-succinyllysine; alternate. A substrate-binding site is contributed by tryptophan 162. N6-acetyllysine; alternate is present on lysine 185. Position 185 is an N6-succinyllysine; alternate (lysine 185). Asparagine 215 lines the substrate pocket. Lysine 227 is modified (N6-succinyllysine). Lysine 234 carries the post-translational modification N6-acetyllysine. An N6-acetyllysine; alternate mark is found at lysine 279 and lysine 296. Position 279 is an N6-(pyridoxal phosphate)lysine; alternate (lysine 279). Lysine 296 is subject to N6-succinyllysine; alternate. Lysine 302 is modified (N6-acetyllysine). Lysine 309 carries the post-translational modification N6-acetyllysine; alternate. Lysine 309 bears the N6-succinyllysine; alternate mark. Arginine 313 is modified (asymmetric dimethylarginine). Residue threonine 333 is modified to Phosphothreonine. Lysine 338 bears the N6-acetyllysine; alternate mark. Lysine 338 is modified (N6-succinyllysine; alternate). Lysine 345 bears the N6-acetyllysine mark. An N6-acetyllysine; alternate modification is found at lysine 363. The residue at position 363 (lysine 363) is an N6-succinyllysine; alternate. Residues lysine 364 and lysine 387 each carry the N6-acetyllysine modification. Residues lysine 396 and lysine 404 each carry the N6-acetyllysine; alternate modification. An N6-succinyllysine; alternate mark is found at lysine 396 and lysine 404. Residue arginine 407 coordinates substrate.

This sequence belongs to the class-I pyridoxal-phosphate-dependent aminotransferase family. In terms of assembly, homodimer. Pyridoxal 5'-phosphate is required as a cofactor.

It is found in the mitochondrion matrix. The protein resides in the cell membrane. The enzyme catalyses L-aspartate + 2-oxoglutarate = oxaloacetate + L-glutamate. The catalysed reaction is L-kynurenine + 2-oxoglutarate = kynurenate + L-glutamate + H2O. Functionally, catalyzes the irreversible transamination of the L-tryptophan metabolite L-kynurenine to form kynurenic acid (KA). As a member of the malate-aspartate shuttle, it has a key role in the intracellular NAD(H) redox balance. Is important for metabolite exchange between mitochondria and cytosol, and for amino acid metabolism. Facilitates cellular uptake of long-chain free fatty acids. The sequence is that of Aspartate aminotransferase, mitochondrial (GOT2) from Pongo abelii (Sumatran orangutan).